The sequence spans 236 residues: MTSEKGPSTGDPTLRRRIEPWEFDVFYDPRELRKEACLLYEIKWGMSRKIWRSSGKNTTNHVEVNFIKKFTSERDFHPSMSCSITWFLSWSPCWECSQAIREFLSRHPGVTLVIYVARLFWHMDQQNRQGLRDLVNSGVTIQIMRASEYYHCWRNFVNYPPGDEAHWPQYPPLWMMLYALELHCIILSLPPCLKISRRWQNHLTFFRLHLQNCHYQTIPPHILLATGLIHPSVAWR.

Residues 10 to 134 form the CMP/dCMP-type deaminase domain; it reads GDPTLRRRIE…QQNRQGLRDL (125 aa). H61 is a Zn(2+) binding site. E63 acts as the Proton donor in catalysis. Residues C93 and C96 each contribute to the Zn(2+) site.

It belongs to the cytidine and deoxycytidylate deaminase family. As to quaternary structure, homodimer. Interacts with A1CF; form an mRNA editing complex. Interacts with RBM47; form an mRNA editing complex. Found in a complex with CELF2/CUGBP2 and A1CF. Interacts with HNRPAB. Interacts with SYNCRIP. Requires Zn(2+) as cofactor. As to expression, expressed exclusively in the small intestine.

Its subcellular location is the cytoplasm. It is found in the nucleus. The catalysed reaction is a cytidine in mRNA + H2O + H(+) = a uridine in mRNA + NH4(+). It carries out the reaction cytidine(6666) in apoB mRNA + H2O + H(+) = uridine(6666) in apoB mRNA + NH4(+). In terms of biological role, cytidine deaminase catalyzing the cytidine to uridine postranscriptional editing of a variety of mRNAs. Form complexes with cofactors that confer differential editing activity and selectivity. Responsible for the postranscriptional editing of a CAA codon for Gln to a UAA codon for stop in the apolipoprotein B mRNA. Also involved in CGA (Arg) to UGA (Stop) editing in the NF1 mRNA. May also play a role in the epigenetic regulation of gene expression by participating in DNA demethylation. This chain is C-&gt;U-editing enzyme APOBEC-1, found in Homo sapiens (Human).